A 200-amino-acid polypeptide reads, in one-letter code: NADH-quinone oxidoreductase subunit B 2 (200 aa).

[4Fe-4S] cluster-binding residues include Cys79, Cys80, Cys144, and Cys174.

This sequence belongs to the complex I 20 kDa subunit family. In terms of assembly, NDH-1 is composed of 14 different subunits. Subunits NuoB, C, D, E, F, and G constitute the peripheral sector of the complex. [4Fe-4S] cluster is required as a cofactor.

It is found in the cell inner membrane. The catalysed reaction is a quinone + NADH + 5 H(+)(in) = a quinol + NAD(+) + 4 H(+)(out). Functionally, NDH-1 shuttles electrons from NADH, via FMN and iron-sulfur (Fe-S) centers, to quinones in the respiratory chain. The immediate electron acceptor for the enzyme in this species is believed to be ubiquinone. Couples the redox reaction to proton translocation (for every two electrons transferred, four hydrogen ions are translocated across the cytoplasmic membrane), and thus conserves the redox energy in a proton gradient. The sequence is that of NADH-quinone oxidoreductase subunit B 2 from Rhodopseudomonas palustris (strain BisA53).